The sequence spans 693 residues: Elongation factor G (693 aa).

The region spanning 8 to 282 (EKTRNIGIMA…AVLDYLPSPL (275 aa)) is the tr-type G domain. Residues 17 to 24 (AHVDAGKT), 81 to 85 (DTPGH), and 135 to 138 (NKMD) each bind GTP.

It belongs to the TRAFAC class translation factor GTPase superfamily. Classic translation factor GTPase family. EF-G/EF-2 subfamily.

It localises to the cytoplasm. In terms of biological role, catalyzes the GTP-dependent ribosomal translocation step during translation elongation. During this step, the ribosome changes from the pre-translocational (PRE) to the post-translocational (POST) state as the newly formed A-site-bound peptidyl-tRNA and P-site-bound deacylated tRNA move to the P and E sites, respectively. Catalyzes the coordinated movement of the two tRNA molecules, the mRNA and conformational changes in the ribosome. In Enterococcus faecalis (strain ATCC 700802 / V583), this protein is Elongation factor G.